A 424-amino-acid polypeptide reads, in one-letter code: UDP-N-acetylglucosamine 1-carboxyvinyltransferase 3 (424 aa).

22 to 23 (KN) is a binding site for phosphoenolpyruvate. Residue arginine 94 participates in UDP-N-acetyl-alpha-D-glucosamine binding. Aspartate 118 (proton donor) is an active-site residue. UDP-N-acetyl-alpha-D-glucosamine is bound by residues 123-127 (RPVDQ), aspartate 306, and leucine 328.

It belongs to the EPSP synthase family. MurA subfamily.

It is found in the cytoplasm. It carries out the reaction phosphoenolpyruvate + UDP-N-acetyl-alpha-D-glucosamine = UDP-N-acetyl-3-O-(1-carboxyvinyl)-alpha-D-glucosamine + phosphate. It functions in the pathway cell wall biogenesis; peptidoglycan biosynthesis. Cell wall formation. Adds enolpyruvyl to UDP-N-acetylglucosamine. In Symbiobacterium thermophilum (strain DSM 24528 / JCM 14929 / IAM 14863 / T), this protein is UDP-N-acetylglucosamine 1-carboxyvinyltransferase 3.